The chain runs to 182 residues: Small ribosomal subunit protein uS4c (182 aa).

Residues 82–143 (MRLDNILFRL…KERSKVLIQN (62 aa)) enclose the S4 RNA-binding domain.

It belongs to the universal ribosomal protein uS4 family. Part of the 30S ribosomal subunit. Contacts protein S5. The interaction surface between S4 and S5 is involved in control of translational fidelity.

Its subcellular location is the plastid. It localises to the chloroplast. One of the primary rRNA binding proteins, it binds directly to 16S rRNA where it nucleates assembly of the body of the 30S subunit. Its function is as follows. With S5 and S12 plays an important role in translational accuracy. The sequence is that of Small ribosomal subunit protein uS4c (rps4) from Alophia veracruzana (Mexican pine woods lily).